Here is a 471-residue protein sequence, read N- to C-terminus: Histone deacetylase 6 (471 aa).

Met1 bears the N-acetylmethionine mark. A histone deacetylase region spans residues 20-333 (RVSYFYEPTI…WCYETAVAVG (314 aa)). The active-site Proton donor/acceptor is His153. 3 residues coordinate Zn(2+): Asp188, His190, and Asp276. Residues 389 to 471 (PSVQFQHTPP…PEPDVNPPSS (83 aa)) are disordered. The span at 453 to 463 (GEDEMDDDNPE) shows a compositional bias: acidic residues.

Belongs to the histone deacetylase family. HD type 1 subfamily. As to quaternary structure, interacts with Coi1, which functions in an SCF complex that recruits regulators for ubiquitination. Interacts with AHL22. Interacts with AS1. Part of the AS1 repressor complex composed of AS1, LBD6/AS2 and HDA6. Binds to EBS and SHL. Interacts with MBD6. Interacts with HDA5. Interacts with FLD. Requires Zn(2+) as cofactor. In terms of tissue distribution, not detected in leaves, stems, flowers and young siliques.

The protein resides in the nucleus. It is found in the nucleolus. It catalyses the reaction N(6)-acetyl-L-lysyl-[histone] + H2O = L-lysyl-[histone] + acetate. Its activity is regulated as follows. Inhibited by trichostatin A. In terms of biological role, responsible for the deacetylation of lysine residues on the N-terminal part of the core histones (H2A, H2B, H3 and H4). Might remove acetyl residues only from specific targets, such as rDNA repeats or complex transgenes. Histone deacetylation gives a tag for epigenetic repression and plays an important role in transcriptional regulation, cell cycle progression and developmental events. Histone deacetylases act via the formation of large multiprotein complexes. Required for rRNA gene silencing in nucleolar dominance. Plays a role in transgene silencing, but this effect seems to bee independent of the histone deacetylase activity. Part of the AS1 repressor complex to regulate the KNOX expression in leaf development. Binds to KNAT1, KNAT2, and KNATM chromatin. Involved in the regulation of flowering time. Forms a histone deacetylase complex with HDA5, FLD and MSI4/FVE that represses FLC gene expression to control flowering time. The chain is Histone deacetylase 6 from Arabidopsis thaliana (Mouse-ear cress).